A 139-amino-acid polypeptide reads, in one-letter code: Cellular retinoic acid-binding protein 2 (139 aa).

The short motif at 21–31 (KALGVNMMMRK) is the Nuclear localization signal element. Lys103 participates in a covalent cross-link: Glycyl lysine isopeptide (Lys-Gly) (interchain with G-Cter in SUMO). 134–136 (RVY) contacts all-trans-retinoate.

Belongs to the calycin superfamily. Fatty-acid binding protein (FABP) family. In terms of assembly, interacts with importin alpha, RXR and RARA. Post-translationally, sumoylated in response to retinoic acid binding, sumoylation is critical for dissociation from ER and subsequent nuclear translocation.

Its subcellular location is the cytoplasm. It localises to the endoplasmic reticulum. The protein resides in the nucleus. Transports retinoic acid to the nucleus. Regulates the access of retinoic acid to the nuclear retinoic acid receptors. The sequence is that of Cellular retinoic acid-binding protein 2 (Crabp2) from Rattus norvegicus (Rat).